The sequence spans 1091 residues: ATP-dependent helicase/deoxyribonuclease subunit B (1091 aa).

The protein belongs to the helicase family. AddB/RexB type 2 subfamily. In terms of assembly, heterodimer of AddA and RexB. It depends on Mg(2+) as a cofactor.

In terms of biological role, the heterodimer acts as both an ATP-dependent DNA helicase and an ATP-dependent, dual-direction single-stranded exonuclease. Recognizes the chi site generating a DNA molecule suitable for the initiation of homologous recombination. This subunit has 5' -&gt; 3' nuclease activity but not helicase activity. This Streptococcus pneumoniae (strain Hungary19A-6) protein is ATP-dependent helicase/deoxyribonuclease subunit B.